A 546-amino-acid chain; its full sequence is Chaperonin GroEL 5 (546 aa).

ATP is bound by residues Thr30–Pro33, Lys51, Asp87–Thr91, Gly415, and Asp495.

The protein belongs to the chaperonin (HSP60) family. In terms of assembly, forms a cylinder of 14 subunits composed of two heptameric rings stacked back-to-back. Interacts with the co-chaperonin GroES.

It is found in the cytoplasm. The enzyme catalyses ATP + H2O + a folded polypeptide = ADP + phosphate + an unfolded polypeptide.. Functionally, together with its co-chaperonin GroES, plays an essential role in assisting protein folding. The GroEL-GroES system forms a nano-cage that allows encapsulation of the non-native substrate proteins and provides a physical environment optimized to promote and accelerate protein folding. This Paraburkholderia xenovorans (strain LB400) protein is Chaperonin GroEL 5.